The sequence spans 63 residues: Large ribosomal subunit protein bL28 (63 aa).

This sequence belongs to the bacterial ribosomal protein bL28 family.

The protein is Large ribosomal subunit protein bL28 of Desulfitobacterium hafniense (strain DSM 10664 / DCB-2).